We begin with the raw amino-acid sequence, 267 residues long: Putative transcription factor Ovo-like 1 (267 aa).

4 C2H2-type zinc fingers span residues 118–140, 146–168, 174–197, and 213–235; these read FTCH…MKCH, HLCT…VRTH, YKCS…KKIH, and YVCE…LKEH.

It localises to the nucleus. Functionally, putative transcription factor. Involved in hair formation and spermatogenesis. May function in the differentiation and/or maintenance of the urogenital system. This chain is Putative transcription factor Ovo-like 1 (OVOL1), found in Bos taurus (Bovine).